A 428-amino-acid polypeptide reads, in one-letter code: UPF0597 protein BF3772 (428 aa).

Belongs to the UPF0597 family.

The chain is UPF0597 protein BF3772 from Bacteroides fragilis (strain YCH46).